Reading from the N-terminus, the 51-residue chain is ATP synthase F(1) complex subunit epsilon, mitochondrial (51 aa).

Residues Lys-21, Lys-32, and Lys-37 each carry the N6-acetyllysine; alternate modification. An N6-succinyllysine; alternate mark is found at Lys-21, Lys-32, and Lys-37. Residue Lys-44 is modified to N6-acetyllysine.

Belongs to the eukaryotic ATPase epsilon family. As to quaternary structure, component of the ATP synthase complex composed at least of ATP5F1A/subunit alpha, ATP5F1B/subunit beta, ATP5MC1/subunit c (homooctomer), MT-ATP6/subunit a, MT-ATP8/subunit 8, ATP5ME/subunit e, ATP5MF/subunit f, ATP5MG/subunit g, ATP5MK/subunit k, ATP5MJ/subunit j, ATP5F1C/subunit gamma, ATP5F1D/subunit delta, ATP5F1E/subunit epsilon, ATP5PF/subunit F6, ATP5PB/subunit b, ATP5PD/subunit d, ATP5PO/subunit OSCP. ATP synthase complex consists of a soluble F(1) head domain (subunits alpha(3) and beta(3)) - the catalytic core - and a membrane F(0) domain - the membrane proton channel (subunits c, a, 8, e, f, g, k and j). These two domains are linked by a central stalk (subunits gamma, delta, and epsilon) rotating inside the F1 region and a stationary peripheral stalk (subunits F6, b, d, and OSCP).

Its subcellular location is the mitochondrion. The protein resides in the mitochondrion inner membrane. Its function is as follows. Subunit epsilon, of the mitochondrial membrane ATP synthase complex (F(1)F(0) ATP synthase or Complex V) that produces ATP from ADP in the presence of a proton gradient across the membrane which is generated by electron transport complexes of the respiratory chain. ATP synthase complex consist of a soluble F(1) head domain - the catalytic core - and a membrane F(1) domain - the membrane proton channel. These two domains are linked by a central stalk rotating inside the F(1) region and a stationary peripheral stalk. During catalysis, ATP synthesis in the catalytic domain of F(1) is coupled via a rotary mechanism of the central stalk subunits to proton translocation. In vivo, can only synthesize ATP although its ATP hydrolase activity can be activated artificially in vitro. May be essential for the assembly of F(1) and may play an important role in the incorporation of the hydrophobic subunit c into the F(1)-c oligomer rotor of the mitochondrial ATP synthase complex. The chain is ATP synthase F(1) complex subunit epsilon, mitochondrial from Bos taurus (Bovine).